Consider the following 383-residue polypeptide: Serine protease 23 (383 aa).

A signal peptide spans 1–19; sequence MAGIPGLLFLLFFLLCAVG. A glycan (N-linked (GlcNAc...) asparagine) is linked at Asn-93. At Ser-109 the chain carries Phosphoserine; by FAM20C. Cys-160 and Cys-176 are disulfide-bonded. Residue His-175 is the Charge relay system of the active site. Asn-207 carries an N-linked (GlcNAc...) asparagine glycan. Residues Asp-240 and Ser-316 each act as charge relay system in the active site.

This sequence belongs to the peptidase S1 family.

It is found in the secreted. The polypeptide is Serine protease 23 (PRSS23) (Homo sapiens (Human)).